We begin with the raw amino-acid sequence, 634 residues long: DNA-directed RNA polymerase subunit gamma (634 aa).

Cys-74, Cys-76, Cys-89, and Cys-92 together coordinate Zn(2+). Residues Asp-471, Asp-473, and Asp-475 each contribute to the Mg(2+) site.

Belongs to the RNA polymerase beta' chain family. RpoC1 subfamily. In terms of assembly, in cyanobacteria the RNAP catalytic core is composed of 2 alpha, 1 beta, 1 beta', 1 gamma and 1 omega subunit. When a sigma factor is associated with the core the holoenzyme is formed, which can initiate transcription. The cofactor is Mg(2+). Requires Zn(2+) as cofactor.

It carries out the reaction RNA(n) + a ribonucleoside 5'-triphosphate = RNA(n+1) + diphosphate. Its function is as follows. DNA-dependent RNA polymerase catalyzes the transcription of DNA into RNA using the four ribonucleoside triphosphates as substrates. The sequence is that of DNA-directed RNA polymerase subunit gamma from Prochlorococcus marinus (strain MIT 9313).